Reading from the N-terminus, the 329-residue chain is MQFIDQARITVRGGRGGDGIVAFRREKYVPAGGPSGGDGGHGADVVLEADSNLQTLLDFKYKRLFAAIDGRRGGPNRCTGASGQPLVIKVPCGTEVRHLTTGILLGDLTNPGERLTVAFGGRGGLGNAHYLSNRNRAPEKCTEGRDGEEWPLQLELKLLAEVGIIGLPNAGKSTLISVLSAARPKIADYPFTTLVPNLGVVRRPSGDGTVFADIPGLIAGAAQGAGLGHDFLRHIERTRLLIHLVDSGADDPVGDLRVVEKELEAYGHGLVSRPRLLVLNKLELLDEQGRDDLLERLEASSGHRPLLISAVMGKGLDALLDQVWQLLGV.

Residues 1 to 159 (MQFIDQARIT…WPLQLELKLL (159 aa)) enclose the Obg domain. Positions 160–328 (AEVGIIGLPN…LLDQVWQLLG (169 aa)) constitute an OBG-type G domain. Residues 166-173 (GLPNAGKS), 191-195 (FTTLV), 213-216 (DIPG), 280-283 (NKLE), and 309-311 (SAV) each bind ATP. Mg(2+) contacts are provided by serine 173 and threonine 193.

The protein belongs to the TRAFAC class OBG-HflX-like GTPase superfamily. OBG GTPase family. As to quaternary structure, monomer. The cofactor is Mg(2+).

It localises to the cytoplasm. In terms of biological role, an essential GTPase which binds GTP, GDP and possibly (p)ppGpp with moderate affinity, with high nucleotide exchange rates and a fairly low GTP hydrolysis rate. Plays a role in control of the cell cycle, stress response, ribosome biogenesis and in those bacteria that undergo differentiation, in morphogenesis control. This is GTPase Obg from Synechococcus sp. (strain WH7803).